A 267-amino-acid polypeptide reads, in one-letter code: V-type proton ATPase subunit D (267 aa).

The protein belongs to the V-ATPase D subunit family. V-ATPase is a heteromultimeric enzyme composed of a peripheral catalytic V1 complex (components A to H) attached to an integral membrane V0 proton pore complex (components: a, c, c', c'', d, e, f and VOA1).

It localises to the vacuole membrane. Its function is as follows. Subunit of the V1 complex of vacuolar(H+)-ATPase (V-ATPase), a multisubunit enzyme composed of a peripheral complex (V1) that hydrolyzes ATP and a membrane integral complex (V0) that translocates protons. V-ATPase is responsible for acidifying and maintaining the pH of intracellular compartments. The sequence is that of V-type proton ATPase subunit D (VMA8) from Candida albicans (strain SC5314 / ATCC MYA-2876) (Yeast).